The sequence spans 228 residues: Geranylgeranylglyceryl phosphate synthase (228 aa).

Lys-14 provides a ligand contact to sn-glycerol 1-phosphate. 2 residues coordinate Mg(2+): Asp-16 and Thr-42. Sn-glycerol 1-phosphate is bound by residues 160–165 (YIEYSG), Gly-190, and 210–211 (GN).

It belongs to the GGGP/HepGP synthase family. Group I subfamily. Requires Mg(2+) as cofactor.

The protein localises to the cytoplasm. It catalyses the reaction sn-glycerol 1-phosphate + (2E,6E,10E)-geranylgeranyl diphosphate = sn-3-O-(geranylgeranyl)glycerol 1-phosphate + diphosphate. Its pathway is membrane lipid metabolism; glycerophospholipid metabolism. Prenyltransferase that catalyzes the transfer of the geranylgeranyl moiety of geranylgeranyl diphosphate (GGPP) to the C3 hydroxyl of sn-glycerol-1-phosphate (G1P). This reaction is the first ether-bond-formation step in the biosynthesis of archaeal membrane lipids. In Methanocella arvoryzae (strain DSM 22066 / NBRC 105507 / MRE50), this protein is Geranylgeranylglyceryl phosphate synthase.